Consider the following 470-residue polypeptide: Adenosylhomocysteinase (470 aa).

Positions 61, 136, and 196 each coordinate substrate. Position 197–199 (Thr197–Thr199) interacts with NAD(+). 2 residues coordinate substrate: Lys226 and Asp230. NAD(+) is bound by residues Asn231, Gly260–Gly265, Glu283, Asn318, Ile339–His341, and Asn384.

Belongs to the adenosylhomocysteinase family. Requires NAD(+) as cofactor.

The protein resides in the cytoplasm. The catalysed reaction is S-adenosyl-L-homocysteine + H2O = L-homocysteine + adenosine. It participates in amino-acid biosynthesis; L-homocysteine biosynthesis; L-homocysteine from S-adenosyl-L-homocysteine: step 1/1. Functionally, may play a key role in the regulation of the intracellular concentration of adenosylhomocysteine. This is Adenosylhomocysteinase from Aromatoleum aromaticum (strain DSM 19018 / LMG 30748 / EbN1) (Azoarcus sp. (strain EbN1)).